The sequence spans 51 residues: MVAYWRQAGLSYIRYSQICAKAVRDALKTEFKANAEKTSGSNVKIVKVKKE.

3 positions are modified to N6-acetyllysine; alternate: K21, K32, and K37. N6-succinyllysine; alternate is present on residues K21, K32, and K37. Residue K44 is modified to N6-acetyllysine.

The protein belongs to the eukaryotic ATPase epsilon family. In terms of assembly, component of the ATP synthase complex composed at least of ATP5F1A/subunit alpha, ATP5F1B/subunit beta, ATP5MC1/subunit c (homooctomer), MT-ATP6/subunit a, MT-ATP8/subunit 8, ATP5ME/subunit e, ATP5MF/subunit f, ATP5MG/subunit g, ATP5MK/subunit k, ATP5MJ/subunit j, ATP5F1C/subunit gamma, ATP5F1D/subunit delta, ATP5F1E/subunit epsilon, ATP5PF/subunit F6, ATP5PB/subunit b, ATP5PD/subunit d, ATP5PO/subunit OSCP. ATP synthase complex consists of a soluble F(1) head domain (subunits alpha(3) and beta(3)) - the catalytic core - and a membrane F(0) domain - the membrane proton channel (subunits c, a, 8, e, f, g, k and j). These two domains are linked by a central stalk (subunits gamma, delta, and epsilon) rotating inside the F1 region and a stationary peripheral stalk (subunits F6, b, d, and OSCP). In terms of tissue distribution, ubiquitous.

It is found in the mitochondrion. Its subcellular location is the mitochondrion inner membrane. Subunit epsilon, of the mitochondrial membrane ATP synthase complex (F(1)F(0) ATP synthase or Complex V) that produces ATP from ADP in the presence of a proton gradient across the membrane which is generated by electron transport complexes of the respiratory chain. ATP synthase complex consist of a soluble F(1) head domain - the catalytic core - and a membrane F(1) domain - the membrane proton channel. These two domains are linked by a central stalk rotating inside the F(1) region and a stationary peripheral stalk. During catalysis, ATP synthesis in the catalytic domain of F(1) is coupled via a rotary mechanism of the central stalk subunits to proton translocation. In vivo, can only synthesize ATP although its ATP hydrolase activity can be activated artificially in vitro. May be essential for the assembly of F(1) and may play an important role in the incorporation of the hydrophobic subunit c into the F(1)-c oligomer rotor of the mitochondrial ATP synthase complex. In Homo sapiens (Human), this protein is ATP synthase F(1) complex subunit epsilon, mitochondrial.